The chain runs to 256 residues: Enkurin (256 aa).

The interval 48–92 (TMGPAKLEVPSPKDFLKKHSKEKTLPPKKKFDRHEPKKPPVPLRT) is disordered. The span at 61-72 (DFLKKHSKEKTL) shows a compositional bias: basic and acidic residues. The short motif at 83–89 (PKKPPVP) is the SH3-binding element. The 93-residue stretch at 160–252 (KRNEEVKKAQ…VLEKHKIIYI (93 aa)) folds into the Enkurin domain. The IQ domain occupies 176–187 (IQENLRKAAMKR).

In terms of assembly, microtubule inner protein component of sperm flagellar doublet microtubules. Binds calmodulin via its IQ domain. Interacts with TRPC1, TRPC2, TRPC5, but not TRPC3. Interacts with CFAP45.

The protein localises to the cytoplasm. The protein resides in the cytoskeleton. It is found in the cilium axoneme. It localises to the flagellum axoneme. Functionally, adapter that functions to localize a calcium-sensitive signal transduction machinery in sperm to a calcium-permeable ion channel. Microtubule inner protein (MIP) part of the dynein-decorated doublet microtubules (DMTs) in cilia axoneme, which is required for motile cilia beating. In Sus scrofa (Pig), this protein is Enkurin (ENKUR).